Here is a 71-residue protein sequence, read N- to C-terminus: Translation initiation factor IF-1 (71 aa).

In terms of domain architecture, S1-like spans 1–71 (MAKQAAIEQD…LTKARITYRY (71 aa)).

Belongs to the IF-1 family. As to quaternary structure, component of the 30S ribosomal translation pre-initiation complex which assembles on the 30S ribosome in the order IF-2 and IF-3, IF-1 and N-formylmethionyl-tRNA(fMet); mRNA recruitment can occur at any time during PIC assembly.

It is found in the cytoplasm. In terms of biological role, one of the essential components for the initiation of protein synthesis. Stabilizes the binding of IF-2 and IF-3 on the 30S subunit to which N-formylmethionyl-tRNA(fMet) subsequently binds. Helps modulate mRNA selection, yielding the 30S pre-initiation complex (PIC). Upon addition of the 50S ribosomal subunit IF-1, IF-2 and IF-3 are released leaving the mature 70S translation initiation complex. The sequence is that of Translation initiation factor IF-1 from Christiangramia forsetii (strain DSM 17595 / CGMCC 1.15422 / KT0803) (Gramella forsetii).